A 407-amino-acid polypeptide reads, in one-letter code: Indoleamine 2,3-dioxygenase 1 (407 aa).

Heme b is bound at residue H350. The interval 362–407 (SKKKPTDGDKSEEPSNVESRGTGGTNPMTFLRSVKDTTEKALLSWP) is disordered. A compositionally biased stretch (basic and acidic residues) spans 365-374 (KPTDGDKSEE).

The protein belongs to the indoleamine 2,3-dioxygenase family. Monomer. Heme b is required as a cofactor. In terms of tissue distribution, highly expressed in epididymis, duodemum, jejunum, ileum, colon and spleen. Highly expressed in epididymis, prostate, duodemum, jejunum, ileum, colon and spleen, not detected in the liver (at protein level). Expressed in tumors only upon exposure to IFN gamma. Constitutively expressed in placenta in trophoblast cells. Expression is restricted to perinuclear regions of primary trophoblast giant cells (TGCs) of fetal origin at mid-gestation (10.5 dpc). After placentation (14 dpc), no IDO expression was detected at the maternal-fetal interface.

The protein localises to the cytoplasm. The protein resides in the cytosol. The catalysed reaction is D-tryptophan + O2 = N-formyl-D-kynurenine. It carries out the reaction L-tryptophan + O2 = N-formyl-L-kynurenine. Activity is inhibited by and MTH-trp (methylthiohydantoin-DL-tryptophan), modestly inhibited by L-1MT (1-methyl-L-tryptophan) but not D-1MT (1-methyl-D-tryptophan). Catalyzes the first and rate limiting step of the catabolism of the essential amino acid tryptophan along the kynurenine pathway. Involved in the peripheral immune tolerance, contributing to maintain homeostasis by preventing autoimmunity or immunopathology that would result from uncontrolled and overreacting immune responses. Tryptophan shortage inhibits T lymphocytes division and accumulation of tryptophan catabolites induces T-cell apoptosis and differentiation of regulatory T-cells. Acts as a suppressor of anti-tumor immunity. Limits the growth of intracellular pathogens by depriving tryptophan. Protects the fetus from maternal immune rejection. This is Indoleamine 2,3-dioxygenase 1 from Mus musculus (Mouse).